Consider the following 237-residue polypeptide: Sugar fermentation stimulation protein homolog (237 aa).

Belongs to the SfsA family.

This Synechocystis sp. (strain ATCC 27184 / PCC 6803 / Kazusa) protein is Sugar fermentation stimulation protein homolog.